A 780-amino-acid polypeptide reads, in one-letter code: MRTHTLGFPRIGGNRELKKAVEDYWKGAATRQQLEDAARAIRLRNWTLQREAGIDVVPVGDFALYDHILDAALLLGVIPPRFRNDDAPRDIDLMFRMARGQGGDRPVAPLEMTKWFDTNYHYLVPELDAATTFAPDAAPLLALIDEALAAGFTPKAVLPGPMTFLWLSKRVDGGTRWSLLPALLDAYGALLRDVAARCPLIQLDEPILSLDLADDIRSRFVPAYARLRVAVPDATLLLASYFAPVGDNLPVALSLPVDVVHLDLVRGPEDLTPALDILTRAAARQPADSGLPQSGSQSGIALSLGVINGRNVWRVDADKAAAPVRAAVAALGPDRVWVAPSCSLLHCPVDLDAETGLDPEVAQWLAFARQKCAEVRLVADMCDLNGRADAPETAAALARNRAALAARAASPVIHDPAVAVRAGTVTPEMGWRATPYTARIAAQRAALRLPVLPATTIGSFPQTVDIRAQRRKLRTGQITEAQYDAAMREAIATAIREQEALGLDVLVHGEPERNDMVEYFGEQLRGFCITANGWVQSYGTRCVKPPLLYGDVARPGPMTVRWITHAQSLTQKPVKGMLTGPVTIACWSFVRDDVPRPVVFRQLALAIRDEVADLEAAGIGVIQIDEPALREGLPLRRAAHAAYLDAAVGAFRLASSGVRDATQIHTHMCYCDFHDIIDHVAALDADVISLEASRSRMELLDVFATHAYPNEVGPGVYDIHSPRVPSIDEMETLLRAASRVLPLDRLWANPDCGLKTRDWPETRASLAHLVAAATRVREGG.

5-methyltetrahydropteroyltri-L-glutamate-binding positions include 15–18 (RELK) and K114. L-homocysteine-binding positions include 457–459 (IGS) and E510. Residues 457–459 (IGS) and E510 contribute to the L-methionine site. 5-methyltetrahydropteroyltri-L-glutamate-binding positions include 541-542 (RC) and W587. Residue D625 coordinates L-homocysteine. Residue D625 coordinates L-methionine. A 5-methyltetrahydropteroyltri-L-glutamate-binding site is contributed by E631. The Zn(2+) site is built by H667, C669, and E691. H720 acts as the Proton donor in catalysis. A Zn(2+)-binding site is contributed by C752.

This sequence belongs to the vitamin-B12 independent methionine synthase family. Zn(2+) serves as cofactor.

The enzyme catalyses 5-methyltetrahydropteroyltri-L-glutamate + L-homocysteine = tetrahydropteroyltri-L-glutamate + L-methionine. It participates in amino-acid biosynthesis; L-methionine biosynthesis via de novo pathway; L-methionine from L-homocysteine (MetE route): step 1/1. In terms of biological role, catalyzes the transfer of a methyl group from 5-methyltetrahydrofolate to homocysteine resulting in methionine formation. The protein is 5-methyltetrahydropteroyltriglutamate--homocysteine methyltransferase of Nitratidesulfovibrio vulgaris (strain DSM 19637 / Miyazaki F) (Desulfovibrio vulgaris).